The primary structure comprises 40 residues: Photosystem II reaction center protein J (40 aa).

The chain crosses the membrane as a helical span at residues 8–28 (IPLWIIGTVAGIPVIGLIGIF).

Belongs to the PsbJ family. PSII is composed of 1 copy each of membrane proteins PsbA, PsbB, PsbC, PsbD, PsbE, PsbF, PsbH, PsbI, PsbJ, PsbK, PsbL, PsbM, PsbT, PsbX, PsbY, PsbZ, Psb30/Ycf12, at least 3 peripheral proteins of the oxygen-evolving complex and a large number of cofactors. It forms dimeric complexes.

The protein resides in the plastid. It localises to the chloroplast thylakoid membrane. Its function is as follows. One of the components of the core complex of photosystem II (PSII). PSII is a light-driven water:plastoquinone oxidoreductase that uses light energy to abstract electrons from H(2)O, generating O(2) and a proton gradient subsequently used for ATP formation. It consists of a core antenna complex that captures photons, and an electron transfer chain that converts photonic excitation into a charge separation. This is Photosystem II reaction center protein J from Pelargonium hortorum (Common geranium).